The following is a 141-amino-acid chain: Large ribosomal subunit protein uL16 (141 aa).

Belongs to the universal ribosomal protein uL16 family. Part of the 50S ribosomal subunit.

Its function is as follows. Binds 23S rRNA and is also seen to make contacts with the A and possibly P site tRNAs. This is Large ribosomal subunit protein uL16 from Deinococcus geothermalis (strain DSM 11300 / CIP 105573 / AG-3a).